The chain runs to 858 residues: Elongation factor 2 (858 aa).

One can recognise a tr-type G domain in the interval 17 to 362 (ANIRNMSVIA…MITIHLPSPV (346 aa)). Residue 26 to 33 (AHVDHGKS) participates in GTP binding. Residue Thr-54 is modified to Phosphothreonine. The residue at position 57 (Thr-57) is a Phosphothreonine; by EEF2K. Thr-59 is modified (phosphothreonine). Lys-152 carries the N6-succinyllysine modification. GTP contacts are provided by residues 158–161 (NKMD) and 216–218 (SGL). The residue at position 235 (Lys-235) is an N6-acetyllysine. Residue Lys-239 is modified to N6-acetyllysine; alternate. Lys-239 participates in a covalent cross-link: Glycyl lysine isopeptide (Lys-Gly) (interchain with G-Cter in SUMO1); alternate. The residue at position 265 (Tyr-265) is a Phosphotyrosine; by CSK. Position 272 is an N6-acetyllysine; alternate (Lys-272). Lys-272 carries the post-translational modification N6-succinyllysine; alternate. Position 275 is an N6-acetyllysine (Lys-275). Residue Lys-322 forms a Glycyl lysine isopeptide (Lys-Gly) (interchain with G-Cter in SUMO) linkage. Ser-325 is subject to Phosphoserine. Tyr-373 carries the post-translational modification Phosphotyrosine; by CSK. At Thr-435 the chain carries Phosphothreonine. 2 positions are modified to N6-acetyllysine: Lys-439 and Lys-445. Position 502 is a phosphoserine (Ser-502). Lys-525 is modified (N6,N6,N6-trimethyllysine; by EEF2KMT). Residue Lys-529 forms a Glycyl lysine isopeptide (Lys-Gly) (interchain with G-Cter in SUMO) linkage. Residue Lys-572 is modified to N6-succinyllysine. The residue at position 595 (Ser-595) is a Phosphoserine; by CDK2. An N6-acetyllysine modification is found at Lys-619. The residue at position 715 (His-715) is a Diphthamide.

Belongs to the TRAFAC class translation factor GTPase superfamily. Classic translation factor GTPase family. EF-G/EF-2 subfamily. As to quaternary structure, binds to 80S ribosomes. Actively translating ribosomes show mutually exclusive binding of eIF5a (EIF5A or EIF5A2) and EEF2/eEF2. Interacts with SERBP1; interaction sequesters EEF2/eEF2 at the A-site of the ribosome, thereby blocking the interaction sites of the mRNA-tRNA complex, promoting ribosome stabilization and hibernation. Interacts with HABP4; interaction takes place at the A-site of hibernating ribosomes and promotes ribosome stabilization. Component of the mRNA surveillance SURF complex, at least composed of ERF1, ERF3 (ERF3A or ERF3B), EEF2, UPF1/RENT1, SMG1, SMG8 and SMG9. Interacts with RBPMS2. Post-translationally, phosphorylation by EF-2 kinase completely inactivates EF-2; it requires prior phosphorylation by CDK2 at Ser-595 during mitotic prometaphase. Phosphorylation by CSK promotes SUMOylation, proteolytic cleavage, and nuclear translocation if the C-terminal fragment. In terms of processing, diphthamide is 2-[3-carboxyamido-3-(trimethyl-ammonio)propyl]histidine. ISGylated. Post-translationally, proteolytically processed at two sites following phosphorylation by CSK. In terms of processing, SUMOylated following phosphorylation by CSK, promotes proteolytic cleavage.

It localises to the cytoplasm. The protein resides in the nucleus. The catalysed reaction is GTP + H2O = GDP + phosphate + H(+). Its function is as follows. Catalyzes the GTP-dependent ribosomal translocation step during translation elongation. During this step, the ribosome changes from the pre-translocational (PRE) to the post-translocational (POST) state as the newly formed A-site-bound peptidyl-tRNA and P-site-bound deacylated tRNA move to the P and E sites, respectively. Catalyzes the coordinated movement of the two tRNA molecules, the mRNA and conformational changes in the ribosome. The sequence is that of Elongation factor 2 (EEF2) from Callithrix jacchus (White-tufted-ear marmoset).